Consider the following 242-residue polypeptide: Endoglucanase (242 aa).

The signal sequence occupies residues 1–21 (MQVIVLPLVFLATFATSGSLA). The active-site Nucleophile is the Asp47. Asn79, Asn103, and Asn217 each carry an N-linked (GlcNAc...) asparagine glycan.

The protein belongs to the glycosyl hydrolase 45 (cellulase K) family. In terms of tissue distribution, expressed in larval carcasses and gut, and adult gut.

The protein localises to the secreted. It carries out the reaction Endohydrolysis of (1-&gt;4)-beta-D-glucosidic linkages in cellulose, lichenin and cereal beta-D-glucans.. This chain is Endoglucanase, found in Phaedon cochleariae (Mustard beetle).